We begin with the raw amino-acid sequence, 278 residues long: Elongation factor Ts 2, mitochondrial (278 aa).

Belongs to the EF-Ts family.

It is found in the mitochondrion. Functionally, associates with the EF-Tu.GDP complex and induces the exchange of GDP to GTP. It remains bound to the aminoacyl-tRNA.EF-Tu.GTP complex up to the GTP hydrolysis stage on the ribosome. The polypeptide is Elongation factor Ts 2, mitochondrial (Trypanosoma cruzi (strain CL Brener)).